A 121-amino-acid chain; its full sequence is Large ribosomal subunit protein uL18 (121 aa).

Belongs to the universal ribosomal protein uL18 family. Part of the 50S ribosomal subunit; part of the 5S rRNA/L5/L18/L25 subcomplex. Contacts the 5S and 23S rRNAs.

Functionally, this is one of the proteins that bind and probably mediate the attachment of the 5S RNA into the large ribosomal subunit, where it forms part of the central protuberance. The polypeptide is Large ribosomal subunit protein uL18 (Delftia acidovorans (strain DSM 14801 / SPH-1)).